A 1008-amino-acid chain; its full sequence is ATP-dependent zinc metalloprotease FTSH 12, chloroplastic (1008 aa).

A chloroplast-targeting transit peptide spans 1–49 (MEIAISYKPNPLISSSTQLLKRSKSFGLVRFPAKYGLGATRKKQLFRVY). Helical transmembrane passes span 154–174 (AALFIYAFALLLSCQRVYVAI) and 427–447 (IHYFMKVFIALLPGILILWFI). ATP is bound at residue 533–540 (GPPGTGKT). Residue H769 participates in Zn(2+) binding. E770 is a catalytic residue. Residues H773 and D849 each contribute to the Zn(2+) site.

It in the N-terminal section; belongs to the AAA ATPase family. This sequence in the C-terminal section; belongs to the peptidase M41 family. It depends on Zn(2+) as a cofactor.

The protein localises to the plastid. Its subcellular location is the chloroplast thylakoid membrane. Functionally, probable ATP-dependent zinc metallopeptidase. The polypeptide is ATP-dependent zinc metalloprotease FTSH 12, chloroplastic (FTSH12) (Arabidopsis thaliana (Mouse-ear cress)).